A 212-amino-acid polypeptide reads, in one-letter code: ER lumen protein-retaining receptor 2 (212 aa).

Over M1 to F4 the chain is Lumenal. Residues R5–W24 form a helical membrane-spanning segment. Topologically, residues K25 to I32 are cytoplasmic. A helical transmembrane segment spans residues S33–F52. The tract at residues R47–Y48 is interaction with the K-D-E-L motif on target proteins. Residues T53–L58 lie on the Lumenal side of the membrane. Residues Y59–Y79 form a helical membrane-spanning segment. Residues M80 to T92 are Cytoplasmic-facing. Residues F93–N110 traverse the membrane as a helical segment. The Lumenal portion of the chain corresponds to H111–L116. The chain crosses the membrane as a helical span at residues E117–L135. Over F136 to T149 the chain is Cytoplasmic. A helical membrane pass occupies residues H150–W168. The interval R159 to R169 is interaction with the K-D-E-L motif on target proteins. The Lumenal segment spans residues R169–L178. A helical membrane pass occupies residues I179–V199. The Cytoplasmic segment spans residues T200 to A212. The interval K204–K207 is important for recycling of cargo proteins with the sequence motif K-D-E-L from the Golgi to the endoplasmic reticulum.

This sequence belongs to the ERD2 family.

The protein localises to the endoplasmic reticulum membrane. Its subcellular location is the golgi apparatus membrane. It is found in the cytoplasmic vesicle. The protein resides in the COPI-coated vesicle membrane. In terms of biological role, membrane receptor that binds the K-D-E-L sequence motif in the C-terminal part of endoplasmic reticulum resident proteins and maintains their localization in that compartment by participating to their vesicle-mediated recycling back from the Golgi. Binding is pH dependent, and is optimal at pH 5-5.4. The chain is ER lumen protein-retaining receptor 2 (KDELR2) from Gallus gallus (Chicken).